The primary structure comprises 512 residues: Amidase 2 (512 aa).

Active-site charge relay system residues include Lys122 and Ser197. Substrate is bound by residues Ser197 and 218-221; that span reads IGGS. The Acyl-ester intermediate role is filled by Ser221.

It belongs to the amidase family.

It carries out the reaction a monocarboxylic acid amide + H2O = a monocarboxylate + NH4(+). The protein operates within xenobiotic degradation. Its function is as follows. Amidase; part of the Fusarium detoxification of benzoxazolinone cluster 2 (FDB2) involved in the degradation of benzoxazolinones produced by the host plant. Maize, wheat, and rye produce the 2 benzoxazinone phytoanticipins 2,4-dihy-droxy-7-methoxy-1,4-benzoxazin-3-one (DIMBOA) and 2,4-dihydroxy-1,4-benzoxazin-3-one (DIBOA) that, due to their inherent instability once released, spontaneously degrade to the more stable corresponding benzoxazolinones, 6-methoxy-2-benzoxazolinone (MBOA) and 2-benzoxazolinone (BOA), respectively. The first step in the detoxification of benzoxazolinones involves the hydrolysis of the cyclic ester bond of benzoxazolinones by the FDB1 cluster gamma-lactamase MBL1 to aminophenols. MBL1 is able to convert BOA into 2-aminophenol (2-AP), as well as MBOA into 5-methoxy-2-aminophenol (2-AMP). The FDB2 cluster N-malonyltransferase FDB2/NAT1 then metabolizes aminophenols via N-malonylation to non-toxic malonamic acids. FDB2/NAT1 converts 2-AP into N-(2-hydroxyphenyl) malonamic acid (HPMA) and 2-AMP into N-(2-hydroxy-4-methoxyphenyl) malonamic acid (HMPMA). The duplicated dienlactone hydrolases DLH1 and DLH2 may provide redundant function for hydrolyzing the lactone moiety in the BOA molecule. The roles of the amidases an other enzymes encoded by the 2 FDB clusters have not been identified so far. The sequence is that of Amidase 2 from Gibberella moniliformis (strain M3125 / FGSC 7600) (Maize ear and stalk rot fungus).